We begin with the raw amino-acid sequence, 77 residues long: MKLIILTGLVLFAIVSFIEAEEETGRACILLYGECTKASGSCCSNLICDCYRKLKKGVQIARQCFCLEKDVVYKKHI.

An N-terminal signal peptide occupies residues Met-1–Ala-20. Positions Glu-21–Arg-26 are excised as a propeptide.

The protein belongs to the neurotoxin 19 (CSTX) family. 10 (U11-Lctx) subfamily. Contains 4 disulfide bonds. Expressed by the venom gland.

Its subcellular location is the secreted. This Lycosa singoriensis (Wolf spider) protein is U11-lycotoxin-Ls1a.